A 528-amino-acid polypeptide reads, in one-letter code: Glutamyl-tRNA(Gln) amidotransferase subunit A, mitochondrial (528 aa).

The active-site Charge relay system is lysine 76. Positions 147-166 are disordered; that stretch reads QYREKRKQNPHSKNEDSDWL. The active-site Charge relay system is serine 171. The active-site Acyl-ester intermediate is serine 195.

Belongs to the amidase family. GatA subfamily. Subunit of the heterotrimeric GatCAB amidotransferase (AdT) complex, composed of A (QRSL1), B (GATB) and C (GATC) subunits.

The protein localises to the mitochondrion. It catalyses the reaction L-glutamyl-tRNA(Gln) + L-glutamine + ATP + H2O = L-glutaminyl-tRNA(Gln) + L-glutamate + ADP + phosphate + H(+). In terms of biological role, allows the formation of correctly charged Gln-tRNA(Gln) through the transamidation of misacylated Glu-tRNA(Gln) in the mitochondria. The reaction takes place in the presence of glutamine and ATP through an activated gamma-phospho-Glu-tRNA(Gln). The protein is Glutamyl-tRNA(Gln) amidotransferase subunit A, mitochondrial of Macaca fascicularis (Crab-eating macaque).